We begin with the raw amino-acid sequence, 409 residues long: Formyl-CoA:oxalate CoA-transferase (409 aa).

CoA contacts are provided by residues 17–18 (QS), 71–74 (LNTK), 95–97 (NFG), Arg-103, and 135–138 (KAYE). Asp-167 serves as the catalytic Nucleophile. The tract at residues 221 to 245 (LAEYPNDDFGDEVPRSGNASGGGQP) is disordered. Residue 242–244 (GGQ) coordinates substrate.

This sequence belongs to the CoA-transferase III family. Frc subfamily. As to quaternary structure, homodimer.

The catalysed reaction is formyl-CoA + oxalate = oxalyl-CoA + formate. Its pathway is metabolic intermediate degradation; oxalate degradation; CO(2) and formate from oxalate: step 1/2. Functionally, involved in the catabolism of oxalate and in the adapatation to low pH via the induction of the oxalate-dependent acid tolerance response (ATR). Catalyzes the transfer of the CoA moiety from formyl-CoA to oxalate. The chain is Formyl-CoA:oxalate CoA-transferase from Streptomyces avermitilis (strain ATCC 31267 / DSM 46492 / JCM 5070 / NBRC 14893 / NCIMB 12804 / NRRL 8165 / MA-4680).